Reading from the N-terminus, the 279-residue chain is Large ribosomal subunit protein uL2 (279 aa).

2 stretches are compositionally biased toward basic residues: residues 211-221 (GRSRWRGKTPH) and 256-279 (SYGKKTRDKKKPSTKFIVRGRKGK). A disordered region spans residues 211 to 279 (GRSRWRGKTP…KFIVRGRKGK (69 aa)).

Belongs to the universal ribosomal protein uL2 family. Part of the 50S ribosomal subunit. Forms a bridge to the 30S subunit in the 70S ribosome.

One of the primary rRNA binding proteins. Required for association of the 30S and 50S subunits to form the 70S ribosome, for tRNA binding and peptide bond formation. It has been suggested to have peptidyltransferase activity; this is somewhat controversial. Makes several contacts with the 16S rRNA in the 70S ribosome. The protein is Large ribosomal subunit protein uL2 of Oenococcus oeni (strain ATCC BAA-331 / PSU-1).